Reading from the N-terminus, the 122-residue chain is MIQKETNLVVADNSGAKKVRCIHVFGGTGRRYAAIGDQIMVTVKAAVPGGVVKKKDVCKAVVVRCAKEKKRKDGSYIRFDENAVVLLNAQGEPRGTRIFGPVARELRDRKYMKIVSLAPEVL.

The protein belongs to the universal ribosomal protein uL14 family. As to quaternary structure, part of the 50S ribosomal subunit. Forms a cluster with proteins L3 and L19. In the 70S ribosome, L14 and L19 interact and together make contacts with the 16S rRNA in bridges B5 and B8.

In terms of biological role, binds to 23S rRNA. Forms part of two intersubunit bridges in the 70S ribosome. The protein is Large ribosomal subunit protein uL14 of Prosthecochloris aestuarii (strain DSM 271 / SK 413).